The chain runs to 492 residues: Glutamate--cysteine ligase A, chloroplastic (492 aa).

The cysteines at positions 156 and 376 are disulfide-linked.

The protein belongs to the carboxylate-amine ligase family. Glutamate--cysteine ligase type 2 subfamily. In terms of assembly, homodimer or monomer when oxidized or reduced, respectively. In terms of processing, the Cys-156-Cys-376 disulfide bridge is known to modulate the enzyme activity according to the redox status. The oxidized form constitutes the active enzyme.

The protein localises to the plastid. It localises to the chloroplast. The enzyme catalyses L-cysteine + L-glutamate + ATP = gamma-L-glutamyl-L-cysteine + ADP + phosphate + H(+). It functions in the pathway sulfur metabolism; glutathione biosynthesis; glutathione from L-cysteine and L-glutamate: step 1/2. The polypeptide is Glutamate--cysteine ligase A, chloroplastic (GSH1-1) (Oryza sativa subsp. japonica (Rice)).